The primary structure comprises 89 residues: Small ribosomal subunit protein uS19 (89 aa).

This sequence belongs to the universal ribosomal protein uS19 family.

In terms of biological role, protein S19 forms a complex with S13 that binds strongly to the 16S ribosomal RNA. This Parabacteroides distasonis (strain ATCC 8503 / DSM 20701 / CIP 104284 / JCM 5825 / NCTC 11152) protein is Small ribosomal subunit protein uS19.